The following is a 94-amino-acid chain: Large ribosomal subunit protein uL23 (94 aa).

Belongs to the universal ribosomal protein uL23 family. As to quaternary structure, part of the 50S ribosomal subunit. Contacts protein L29, and trigger factor when it is bound to the ribosome.

In terms of biological role, one of the early assembly proteins it binds 23S rRNA. One of the proteins that surrounds the polypeptide exit tunnel on the outside of the ribosome. Forms the main docking site for trigger factor binding to the ribosome. The sequence is that of Large ribosomal subunit protein uL23 from Ligilactobacillus salivarius (strain UCC118) (Lactobacillus salivarius).